The following is a 305-amino-acid chain: Serine/threonine-protein phosphatase PP-X homolog 3 (305 aa).

Residues aspartate 53, histidine 55, aspartate 81, and asparagine 113 each coordinate Mn(2+). Histidine 114 (proton donor) is an active-site residue. Mn(2+)-binding residues include histidine 163 and histidine 237.

Belongs to the PPP phosphatase family. PP-4 (PP-X) subfamily. The cofactor is Mn(2+).

The enzyme catalyses O-phospho-L-seryl-[protein] + H2O = L-seryl-[protein] + phosphate. It carries out the reaction O-phospho-L-threonyl-[protein] + H2O = L-threonyl-[protein] + phosphate. This chain is Serine/threonine-protein phosphatase PP-X homolog 3 (Ppx3), found in Paramecium tetraurelia.